Consider the following 260-residue polypeptide: Ribonuclease PH (260 aa).

Residues R88 and 126 to 128 (GTR) contribute to the phosphate site.

This sequence belongs to the RNase PH family. As to quaternary structure, homohexameric ring arranged as a trimer of dimers.

It catalyses the reaction tRNA(n+1) + phosphate = tRNA(n) + a ribonucleoside 5'-diphosphate. Functionally, phosphorolytic 3'-5' exoribonuclease that plays an important role in tRNA 3'-end maturation. Removes nucleotide residues following the 3'-CCA terminus of tRNAs; can also add nucleotides to the ends of RNA molecules by using nucleoside diphosphates as substrates, but this may not be physiologically important. Probably plays a role in initiation of 16S rRNA degradation (leading to ribosome degradation) during starvation. The protein is Ribonuclease PH of Mycolicibacterium gilvum (strain PYR-GCK) (Mycobacterium gilvum (strain PYR-GCK)).